A 134-amino-acid polypeptide reads, in one-letter code: Small ribosomal subunit protein bS6 (134 aa).

Positions Glu-99–Asn-134 are disordered. The span at Gln-105–Asn-134 shows a compositional bias: basic and acidic residues.

Belongs to the bacterial ribosomal protein bS6 family.

Functionally, binds together with bS18 to 16S ribosomal RNA. This is Small ribosomal subunit protein bS6 from Methylobacterium nodulans (strain LMG 21967 / CNCM I-2342 / ORS 2060).